The chain runs to 341 residues: ATP-dependent 6-phosphofructokinase 2 (341 aa).

ATP is bound by residues Gly-10, 72–73, and 102–105; these read RL and GEGT. A Mg(2+)-binding site is contributed by Glu-103. Substrate contacts are provided by residues 125–127, Arg-162, 169–171, Glu-222, Lys-266, and 272–275; these read TID, MGR, and HVQR. Catalysis depends on Asp-127, which acts as the Proton acceptor.

The protein belongs to the phosphofructokinase type A (PFKA) family. Mixed-substrate PFK group III subfamily. Homodimer or homotetramer. Requires Mg(2+) as cofactor.

It is found in the cytoplasm. The enzyme catalyses beta-D-fructose 6-phosphate + ATP = beta-D-fructose 1,6-bisphosphate + ADP + H(+). The protein operates within carbohydrate degradation; glycolysis; D-glyceraldehyde 3-phosphate and glycerone phosphate from D-glucose: step 3/4. With respect to regulation, allosterically inhibited by phosphoenolpyruvate. Catalyzes the phosphorylation of D-fructose 6-phosphate to fructose 1,6-bisphosphate by ATP, the first committing step of glycolysis. The polypeptide is ATP-dependent 6-phosphofructokinase 2 (Streptomyces coelicolor (strain ATCC BAA-471 / A3(2) / M145)).